We begin with the raw amino-acid sequence, 582 residues long: La-related protein 7 (582 aa).

Met-1 bears the N-acetylmethionine mark. The segment at 1–27 (METESGNQEKVMEEESTEKKKEVEKKK) is disordered. Over residues 10-25 (KVMEEESTEKKKEVEK) the composition is skewed to basic and acidic residues. In terms of domain architecture, HTH La-type RNA-binding spans 28–122 (RSRVKQVLAD…KPLGERPKDE (95 aa)). The 79-residue stretch at 125–203 (RTVYVELLPK…PRKPGIFPKT (79 aa)) folds into the RRM domain. 2 disordered regions span residues 188–368 (NPPE…ERHK) and 410–442 (KSES…RTQE). The span at 219-228 (KKKKKKKGRM) shows a compositional bias: basic residues. Residues 229–240 (KKEDNIQAKEEN) show a composition bias toward basic and acidic residues. A Glycyl lysine isopeptide (Lys-Gly) (interchain with G-Cter in SUMO2) cross-link involves residue Lys-237. Residue Thr-257 is modified to Phosphothreonine. 6 positions are modified to phosphoserine: Ser-258, Ser-261, Ser-273, Ser-298, Ser-299, and Ser-300. A compositionally biased stretch (basic and acidic residues) spans 316-335 (IQKDIIKEASEASKENRDIE). At Ser-337 the chain carries Phosphoserine. Thr-338 is subject to Phosphothreonine. A Phosphoserine modification is found at Ser-351. The segment covering 354–367 (KTKRKHKKKHKERH) has biased composition (basic residues). A Glycyl lysine isopeptide (Lys-Gly) (interchain with G-Cter in SUMO2) cross-link involves residue Lys-410. Residues 428–442 (KNEKTANREECRTQE) show a composition bias toward basic and acidic residues. The xRRM domain maps to 450–563 (QFVSGVIVKI…TEKLITKAEK (114 aa)).

This sequence belongs to the LARP7 family. In terms of assembly, core component of the 7SK RNP complex, at least composed of 7SK RNA, LARP7, MEPCE, HEXIM1 (or HEXIM2) and P-TEFb (composed of CDK9 and CCNT1/cyclin-T1). Interacts with METTL16. Interacts with RBM7; upon genotoxic stress this interaction is enhanced, triggering the release of inactive P-TEFb complex from the core, yielding to P-TEFb complex activation. Associates with box C/D small nucleolar ribonucleoprotein (snoRNP) complexes.

It localises to the nucleus. Its subcellular location is the nucleoplasm. In terms of biological role, RNA-binding protein that specifically binds distinct small nuclear RNA (snRNAs) and regulates their processing and function. Specifically binds the 7SK snRNA (7SK RNA) and acts as a core component of the 7SK ribonucleoprotein (RNP) complex, thereby acting as a negative regulator of transcription elongation by RNA polymerase II. The 7SK RNP complex sequesters the positive transcription elongation factor b (P-TEFb) in a large inactive 7SK RNP complex preventing RNA polymerase II phosphorylation and subsequent transcriptional elongation. The 7SK RNP complex also promotes snRNA gene transcription by RNA polymerase II via interaction with the little elongation complex (LEC). LARP7 specifically binds to the highly conserved 3'-terminal U-rich stretch of 7SK RNA; on stimulation, remains associated with 7SK RNA, whereas P-TEFb is released from the complex. LARP7 also acts as a regulator of mRNA splicing fidelity by promoting U6 snRNA processing. Specifically binds U6 snRNAs and associates with a subset of box C/D RNP complexes: promotes U6 snRNA 2'-O-methylation by facilitating U6 snRNA loading into box C/D RNP complexes. U6 snRNA 2'-O-methylation is required for mRNA splicing fidelity. Binds U6 snRNAs with a 5'-CAGGG-3' sequence motif. U6 snRNA processing is required for spermatogenesis. The polypeptide is La-related protein 7 (Homo sapiens (Human)).